A 461-amino-acid polypeptide reads, in one-letter code: Pancreatic triacylglycerol lipase (461 aa).

The first 12 residues, 1–12 (WTLSLLLGAVVG), serve as a signal peptide directing secretion. 2 disulfides stabilise this stretch: Cys-16-Cys-22 and Cys-103-Cys-114. Ser-165 (nucleophile) is an active-site residue. Asp-189 (charge relay system) is an active-site residue. Positions 200, 203, 205, and 208 each coordinate Ca(2+). Cys-250 and Cys-274 are oxidised to a cystine. Catalysis depends on His-276, which acts as the Charge relay system. 3 cysteine pairs are disulfide-bonded: Cys-298–Cys-309, Cys-312–Cys-317, and Cys-445–Cys-461. In terms of domain architecture, PLAT spans 351–461 (WRYRVDVTLS…EDVLLTLTAC (111 aa)).

The protein belongs to the AB hydrolase superfamily. Lipase family. In terms of assembly, forms a 1:1 stoichiometric complex with (pro)colipase/CLPS.

It localises to the secreted. The enzyme catalyses a triacylglycerol + H2O = a diacylglycerol + a fatty acid + H(+). It catalyses the reaction 1,2,3-tributanoylglycerol + H2O = dibutanoylglycerol + butanoate + H(+). The catalysed reaction is 1,2,3-tri-(9Z-octadecenoyl)-glycerol + H2O = di-(9Z)-octadecenoylglycerol + (9Z)-octadecenoate + H(+). It carries out the reaction all-trans-retinyl hexadecanoate + H2O = all-trans-retinol + hexadecanoate + H(+). The enzyme catalyses 1,2-di-(9Z-octadecenoyl)-glycerol + H2O = (9Z-octadecenoyl)-glycerol + (9Z)-octadecenoate + H(+). Its activity is regulated as follows. Inhibited by bile salts, is reactivated by (pro)colipase/CLPS. Its function is as follows. Plays an important role in fat metabolism. It preferentially splits the esters of long-chain fatty acids at positions 1 and 3, producing mainly 2-monoacylglycerol and free fatty acids, and shows considerably higher activity against insoluble emulsified substrates than against soluble ones. The polypeptide is Pancreatic triacylglycerol lipase (PNLIP) (Equus caballus (Horse)).